Reading from the N-terminus, the 429-residue chain is Probable M18 family aminopeptidase 2 (429 aa).

Zn(2+) is bound by residues His-82, His-156, and His-401.

It belongs to the peptidase M18 family. Zn(2+) serves as cofactor.

The chain is Probable M18 family aminopeptidase 2 from Pseudomonas putida (strain GB-1).